The primary structure comprises 499 residues: UDP-N-acetylmuramoyl-L-alanyl-D-glutamate--2,6-diaminopimelate ligase (499 aa).

UDP-N-acetyl-alpha-D-muramoyl-L-alanyl-D-glutamate-binding residues include leucine 30 and serine 32. 122–128 (GTNGKTT) lines the ATP pocket. Residues 164–165 (TT), serine 191, glutamine 197, and arginine 199 contribute to the UDP-N-acetyl-alpha-D-muramoyl-L-alanyl-D-glutamate site. At lysine 231 the chain carries N6-carboxylysine. Residues arginine 397, 421 to 424 (DNPR), glycine 472, and glutamate 476 each bind meso-2,6-diaminopimelate. The Meso-diaminopimelate recognition motif motif lies at 421 to 424 (DNPR).

The protein belongs to the MurCDEF family. MurE subfamily. Mg(2+) is required as a cofactor. In terms of processing, carboxylation is probably crucial for Mg(2+) binding and, consequently, for the gamma-phosphate positioning of ATP.

Its subcellular location is the cytoplasm. The catalysed reaction is UDP-N-acetyl-alpha-D-muramoyl-L-alanyl-D-glutamate + meso-2,6-diaminopimelate + ATP = UDP-N-acetyl-alpha-D-muramoyl-L-alanyl-gamma-D-glutamyl-meso-2,6-diaminopimelate + ADP + phosphate + H(+). It functions in the pathway cell wall biogenesis; peptidoglycan biosynthesis. In terms of biological role, catalyzes the addition of meso-diaminopimelic acid to the nucleotide precursor UDP-N-acetylmuramoyl-L-alanyl-D-glutamate (UMAG) in the biosynthesis of bacterial cell-wall peptidoglycan. The protein is UDP-N-acetylmuramoyl-L-alanyl-D-glutamate--2,6-diaminopimelate ligase of Blochmanniella floridana.